Here is a 262-residue protein sequence, read N- to C-terminus: Transcription factor bHLH81 (262 aa).

A disordered region spans residues 1–29 (MQPTSVGSSGGGDDGGGRGGGGGLSRSGL). Over residues 8–25 (SSGGGDDGGGRGGGGGLS) the composition is skewed to gly residues. The bHLH domain maps to 190 to 240 (CATHPRSIAERVRRTRISDRIRKLQELVPNMDKQTNTADMLEEAVEYVKVL).

In terms of assembly, homodimer. As to expression, expressed in flowers.

It localises to the nucleus. The polypeptide is Transcription factor bHLH81 (BHLH81) (Arabidopsis thaliana (Mouse-ear cress)).